Reading from the N-terminus, the 312-residue chain is Protoheme IX farnesyltransferase (312 aa).

Residues 1-36 (MNKSNTAIDPTNVIEAGPDSSVADVQQKSWKDYLVL) are Cytoplasmic-facing. The chain crosses the membrane as a helical span at residues 37 to 55 (AKQGIVTSNLITTFAGIYL). The Extracellular segment spans residues 56–69 (AIVYTGTVFTMHLD). Residues 70–88 (TMIFALLGAALVMAGGCTL) form a helical membrane-spanning segment. At 89-110 (NNYIDRDIDHLMERTKERPTVT) the chain is on the cytoplasmic side. A helical membrane pass occupies residues 111–129 (GRFSAKHVLLVGLAQAALG). Over 130-138 (IIFLALTTP) the chain is Extracellular. The chain crosses the membrane as a helical span at residues 139-157 (TAAVIGLIGLFIYVVLYTM). At 158 to 228 (WTKRTTTLNT…YRAAGIPMLP (71 aa)) the chain is on the cytoplasmic side. A helical membrane pass occupies residues 229–247 (VVAGFEMTKRQMVVYVAAL). Residues 248-259 (LPVSLMLYPFGL) lie on the Extracellular side of the membrane. Residues 260 to 275 (VYTIVAAVLGVGWLAL) form a helical membrane-spanning segment. Topologically, residues 276-296 (GIAGFKMKDDIKWARLMFVYS) are cytoplasmic. A helical membrane pass occupies residues 297–307 (LNYLTILFVLM). Residues 308-312 (VIVHF) lie on the Extracellular side of the membrane.

Belongs to the UbiA prenyltransferase family.

The protein resides in the cell membrane. It catalyses the reaction heme b + (2E,6E)-farnesyl diphosphate + H2O = Fe(II)-heme o + diphosphate. The protein operates within porphyrin-containing compound metabolism; heme O biosynthesis; heme O from protoheme: step 1/1. Its function is as follows. Converts protoheme IX and farnesyl diphosphate to heme O. This chain is Protoheme IX farnesyltransferase (ctaB), found in Alkalihalophilus pseudofirmus (strain ATCC BAA-2126 / JCM 17055 / OF4) (Bacillus pseudofirmus).